A 180-amino-acid chain; its full sequence is Adenine phosphoribosyltransferase (180 aa).

Belongs to the purine/pyrimidine phosphoribosyltransferase family. As to quaternary structure, homodimer.

Its subcellular location is the cytoplasm. It carries out the reaction AMP + diphosphate = 5-phospho-alpha-D-ribose 1-diphosphate + adenine. Its pathway is purine metabolism; AMP biosynthesis via salvage pathway; AMP from adenine: step 1/1. Functionally, catalyzes a salvage reaction resulting in the formation of AMP, that is energically less costly than de novo synthesis. This is Adenine phosphoribosyltransferase from Mycoplasma genitalium (strain ATCC 33530 / DSM 19775 / NCTC 10195 / G37) (Mycoplasmoides genitalium).